The following is a 403-amino-acid chain: Poly(rC)-binding protein 4 (403 aa).

KH domains are found at residues 17 to 67, 101 to 154, and 241 to 293; these read TLTL…TITG, PVTL…TVSG, and TSSQ…TITG.

In terms of tissue distribution, widely expressed, with highest levels in testis and lowest in heart.

The protein resides in the cytoplasm. Its function is as follows. Single-stranded nucleic acid binding protein that binds preferentially to oligo dC. The chain is Poly(rC)-binding protein 4 (Pcbp4) from Mus musculus (Mouse).